A 359-amino-acid polypeptide reads, in one-letter code: Phosphate acyltransferase (359 aa).

Belongs to the PlsX family. In terms of assembly, homodimer. Probably interacts with PlsY.

The protein resides in the cytoplasm. It carries out the reaction a fatty acyl-[ACP] + phosphate = an acyl phosphate + holo-[ACP]. Its pathway is lipid metabolism; phospholipid metabolism. In terms of biological role, catalyzes the reversible formation of acyl-phosphate (acyl-PO(4)) from acyl-[acyl-carrier-protein] (acyl-ACP). This enzyme utilizes acyl-ACP as fatty acyl donor, but not acyl-CoA. This chain is Phosphate acyltransferase, found in Citrobacter koseri (strain ATCC BAA-895 / CDC 4225-83 / SGSC4696).